Consider the following 602-residue polypeptide: Protein NRT1/ PTR FAMILY 5.7 (602 aa).

A run of 2 helical transmembrane segments spans residues 56–73 (LSYF…TTIL) and 87–107 (WSGV…AYLG). A Phosphothreonine modification is found at Thr111. A run of 10 helical transmembrane segments spans residues 112 to 132 (VLLA…SWFI), 152 to 172 (IAFF…KPSL), 197 to 217 (WWNA…VYIE), 220 to 240 (IGWG…FFIF), 337 to 357 (VKLL…GVCA), 381 to 401 (IVPP…TVTI), 422 to 442 (ILQR…IAAL), 465 to 485 (IWLA…LVGL), 500 to 520 (LGIA…NLLI), and 548 to 568 (FYWM…IVAM).

This sequence belongs to the major facilitator superfamily. Proton-dependent oligopeptide transporter (POT/PTR) (TC 2.A.17) family. In terms of tissue distribution, expressed in shoots, stems, leaves and flowers.

It is found in the membrane. The chain is Protein NRT1/ PTR FAMILY 5.7 (NPF5.7) from Arabidopsis thaliana (Mouse-ear cress).